Consider the following 102-residue polypeptide: ATP-dependent Clp protease adapter protein ClpS (102 aa).

It belongs to the ClpS family. As to quaternary structure, binds to the N-terminal domain of the chaperone ClpA.

Functionally, involved in the modulation of the specificity of the ClpAP-mediated ATP-dependent protein degradation. The protein is ATP-dependent Clp protease adapter protein ClpS of Shewanella sp. (strain ANA-3).